A 436-amino-acid polypeptide reads, in one-letter code: Divalent metal cation transporter MntH (436 aa).

Basic and acidic residues predominate over residues 1-22; that stretch reads MDSRSPSLPDDRPDPPEQHLDA. Residues 1–31 are disordered; that stretch reads MDSRSPSLPDDRPDPPEQHLDARAGATLRGT. Helical transmembrane passes span 40 to 60, 71 to 91, 115 to 135, 144 to 164, 177 to 197, 216 to 236, 264 to 284, 304 to 324, 354 to 374, 375 to 395, and 411 to 431; these read ILPFLGPAVIASIAYMDPGNF, GYSLLWVILAANLMAMVIQNL, LVWFYWIQAELVAMATDLAEF, LLTGLPMFWGAVVTGVVTFWL, LAVGAFVLMIGVAYLVQVVLA, GSAYLAVGIIGATVMPHVIYL, VIAAMGLAGLINMSMLAVAAA, LTPLLGPAASVLFAVALLASG, LITMLPAFIVILLGMDPSSVL, ILSQVILCFGVPFALVPLLLF, and FTVIGWVIAVIIIALNGYLLW.

It belongs to the NRAMP family.

Its subcellular location is the cell membrane. In terms of biological role, h(+)-stimulated, divalent metal cation uptake system. This chain is Divalent metal cation transporter MntH, found in Deinococcus radiodurans (strain ATCC 13939 / DSM 20539 / JCM 16871 / CCUG 27074 / LMG 4051 / NBRC 15346 / NCIMB 9279 / VKM B-1422 / R1).